A 293-amino-acid chain; its full sequence is tRNA pseudouridine synthase B (293 aa).

Asp40 (nucleophile) is an active-site residue.

Belongs to the pseudouridine synthase TruB family. Type 1 subfamily.

The catalysed reaction is uridine(55) in tRNA = pseudouridine(55) in tRNA. In terms of biological role, responsible for synthesis of pseudouridine from uracil-55 in the psi GC loop of transfer RNAs. The sequence is that of tRNA pseudouridine synthase B from Rickettsia akari (strain Hartford).